The chain runs to 393 residues: Protein TsgA (393 aa).

12 helical membrane passes run 11–31 (WISFLSYALTGALVIVTGMVM), 51–71 (FLNAGILISIFLNAWLMEIVP), 78–98 (FGFILMILAVAGLMLSHSLAL), 101–121 (AAMFVLGLVSGITMSIGTFLI), 134–154 (LLFTDSFFSMAGMVFPMVAAF), 162–182 (WYWVYACIGLVYLAIFILTFG), 206–226 (IGVLFLAVAALCYILGQLGFI), 245–265 (ALVSDFWMSYMFGMWAFSFIL), 273–293 (ILTVLAGMATVLMYLFITGTQ), 298–318 (WFILTLGFFSSAIYTSIITLG), 332–352 (FILTCGTIGTMLTFVVTGPIV), and 361–381 (LLTANGLYAVVFVMCFALGFV).

The protein belongs to the major facilitator superfamily. TsgA family.

The protein localises to the cell inner membrane. This chain is Protein TsgA, found in Salmonella arizonae (strain ATCC BAA-731 / CDC346-86 / RSK2980).